Reading from the N-terminus, the 309-residue chain is MDILTTILNLLLPPLTIIFLFLFYPFYLLIKLVLCLRKNLHFENVARKVVLITGASSGIGEHVAYEYAKKGAYLALVARRRDRLEIVAETSRQLGSGNVIIIPGDVSNVEDCKKFIDETIRHFGKLDHLINNAGVFQTVLFEDFTQIQDANPIMDINFWGTTYITYFAIPHLRKSKGKIVAITSGSANIPLPLASIYAASKAALLRFFETLRIELSPDIKITIVLPGVVSTDMTTPHCIEKYGSDFILSESVSKCAKAIFRGIGRGETYIEEPSWMKWLFIMKNVCPEIVDYGLNYLFVSYLKPYFKRD.

Residues 10 to 30 (LLLPPLTIIFLFLFYPFYLLI) traverse the membrane as a helical; Signal-anchor for type II membrane protein segment. NADP(+) is bound by residues 54-80 (GASS…VARR) and Asp105. Ser184 lines the substrate pocket. The Proton acceptor role is filled by Tyr197. Residues 197–201 (YAASK) and Lys201 each bind NADP(+).

Belongs to the short-chain dehydrogenases/reductases (SDR) family.

Its subcellular location is the membrane. The sequence is that of 11-beta-hydroxysteroid dehydrogenase-like 3 (HSD3) from Arabidopsis thaliana (Mouse-ear cress).